A 146-amino-acid chain; its full sequence is Snaclec agkicetin-C subunit beta (146 aa).

The signal sequence occupies residues 1–23 (MGRFIFVSFGLLVVFLSLSGTGA). Cystine bridges form between Cys25–Cys36, Cys53–Cys142, and Cys119–Cys134. Residues 32–143 (YEGNCYLVVK…CSRTQPFVCK (112 aa)) form the C-type lectin domain.

The protein belongs to the snaclec family. In terms of assembly, heterodimer of subunits alpha and beta; disulfide-linked. As to expression, expressed by the venom gland.

It localises to the secreted. In terms of biological role, is a potent glycoprotein Ibalpha (GP1BA) antagonist. Concentration-dependently inhibits botrocetin-, ristocetin- and low dose thrombin-induced platelet aggregation. Inhibits platelet adhesion only through inhibiting the vWF interaction with GP1BA, but has minimal effect on other platelet receptors, such as alpha-IIb/beta-3 (ITGA2B/ITGB3) or alpha-2/beta-1 (ITGA2/ITGB1). Causes an instant severe thrombocytopenia in rats and is not lethal to mice. The chain is Snaclec agkicetin-C subunit beta from Deinagkistrodon acutus (Hundred-pace snake).